An 876-amino-acid chain; its full sequence is DNA polymerase I (876 aa).

The region spanning 1–310 is the 5'-3' exonuclease domain; sequence MKNKLVLIDG…FAIADSVTDE (310 aa). A subtilisin large fragment region spans residues 289 to 876; it reads TDEGEKPLAG…HYGPTWYDAK (588 aa). Residues 469-876 form a polymerase region; sequence EQDRLLTELE…HYGPTWYDAK (408 aa).

It belongs to the DNA polymerase type-A family. Single-chain monomer with multiple functions.

The catalysed reaction is DNA(n) + a 2'-deoxyribonucleoside 5'-triphosphate = DNA(n+1) + diphosphate. Functionally, in addition to polymerase activity, the recombinant enzyme has strand displacement and 5'-3' exonuclease activity, but lacks proofreading 3'-5' exonuclease activity. The chain is DNA polymerase I (polA) from Geobacillus stearothermophilus (Bacillus stearothermophilus).